The sequence spans 493 residues: C2H2-type transcription factor ffmA (493 aa).

The segment covering 1–18 (MPMPQYTMQPQYPVSQPH) has biased composition (low complexity). Disordered stretches follow at residues 1–50 (MPMP…SRYP), 68–140 (TTVG…YPDG), and 164–202 (EPPRTQVVGSQGRRGILPSVPGRVAPVTNGVNGTAKNTT). Polar residues-rich tracts occupy residues 69–79 (TVGSLPPSTFL) and 192–202 (NGVNGTAKNTT). The C2H2-type 1 zinc-finger motif lies at 212-234 (FPCPHCNKTYLHAKHLKRHLLRH). A C2H2-type 2; degenerate zinc finger spans residues 240–265 (YMCVLCKDTFSRSDILKRHFQKCSIR). 2 stretches are compositionally biased toward polar residues: residues 288–307 (QAAANTAKSLQEEVSSTVPP) and 484–493 (ASTTLGGDGK). Disordered regions lie at residues 288-316 (QAAANTAKSLQEEVSSTVPPSNGIAGATF) and 468-493 (TTTAGPQEGGMNGLYLASTTLGGDGK).

Belongs to the krueppel C2H2-type zinc-finger protein family.

It is found in the nucleus. Functionally, transcription factor that acts in coordination with atrR to regulate the expression of the ABC-type multidrug transporter abcG1 and thus plays a role in azole susceptibility. Regulates the expression of genes involved in fermentation. Is able to promote expression from the yeast FLO11 promoter. The protein is C2H2-type transcription factor ffmA of Aspergillus fumigatus (strain CBS 144.89 / FGSC A1163 / CEA10) (Neosartorya fumigata).